Consider the following 578-residue polypeptide: uncharacterized protein (578 aa).

This is an uncharacterized protein from Ostreid herpesvirus 1 (isolate France) (OsHV-1).